The chain runs to 127 residues: Large ribosomal subunit protein bL20 (127 aa).

The protein belongs to the bacterial ribosomal protein bL20 family.

Functionally, binds directly to 23S ribosomal RNA and is necessary for the in vitro assembly process of the 50S ribosomal subunit. It is not involved in the protein synthesizing functions of that subunit. This is Large ribosomal subunit protein bL20 from Streptomyces avermitilis (strain ATCC 31267 / DSM 46492 / JCM 5070 / NBRC 14893 / NCIMB 12804 / NRRL 8165 / MA-4680).